The primary structure comprises 669 residues: MTVLAPLRRLHTRAAFSSYGREIALQKRFLNLNSCSAVRRYGTGFSNNLRIKKLKNAFGVVRANSTKSTSTVTTASPIKYDSSFVGKTGGEIFHDMMLKHNVKHVFGYPGGAILPVFDAIYRSPHFEFILPRHEQAAGHAAQAYSRVTKKPGVVLVTSGPGATNVITPIADALADGTPLVVFSGQVATSAIGSDAFQEADMVGISRSCTKWNVMVKDVADLPRRIDEAFEIATSGRPGPVLVDLPKDVTASVLKEPIPILSSVPSMNRRMKEVLEEGSKNVTAKIDRVANLLKLAKKPVIFCGHGVLANPECPTLLRKFSERLQIPVTTSLLGLGAVDERSDLSLHMLGMHGSGYANMAMQEADLILALGVRFDDRVTGNVSLFAPQARLAAAEERGGIIHFDISPKNIGKVVQPTEAIEGDVYESLKLLDSATKNIKIPSRFDWLSQIQTWKERFPFTFTRSAPGELVKPQEVIQELDKQTSDIKDKVTITTGVGAHQMWAATFYRWTKPSSLVTSGGLGTMGFGLPAAIGASVAAPKDIVIDIDGDASFSMTGMELATVRQFDIPVKILILNNEEQGMVTQWQNLFYEKRYSHTHQKNPNFVKLADAMGIKALRVEKREDLAKKMKEFLSTKGPVLMEVLVAQKEHVYPFVPGGKALHQFILHESLS.

The N-terminal 140 residues, 1-140 (MTVLAPLRRL…PRHEQAAGHA (140 aa)), are a transit peptide targeting the mitochondrion. Glu-134 lines the thiamine diphosphate pocket. Residues Arg-236, 351–372 (HGSG…LGVR), and 403–422 (DISP…IEGD) contribute to the FAD site. The interval 497–577 (AHQMWAATFY…VKILILNNEE (81 aa)) is thiamine pyrophosphate binding. Asp-548 and Asn-575 together coordinate Mg(2+).

Belongs to the TPP enzyme family. The cofactor is Mg(2+). Thiamine diphosphate serves as cofactor.

Its subcellular location is the mitochondrion. It catalyses the reaction 2 pyruvate + H(+) = (2S)-2-acetolactate + CO2. Its pathway is amino-acid biosynthesis; L-isoleucine biosynthesis; L-isoleucine from 2-oxobutanoate: step 1/4. It participates in amino-acid biosynthesis; L-valine biosynthesis; L-valine from pyruvate: step 1/4. This is Acetolactate synthase, mitochondrial (ilv1) from Schizosaccharomyces pombe (strain 972 / ATCC 24843) (Fission yeast).